A 72-amino-acid polypeptide reads, in one-letter code: Translation initiation factor IF-1 (72 aa).

The region spanning Met-1–Lys-72 is the S1-like domain.

This sequence belongs to the IF-1 family. Component of the 30S ribosomal translation pre-initiation complex which assembles on the 30S ribosome in the order IF-2 and IF-3, IF-1 and N-formylmethionyl-tRNA(fMet); mRNA recruitment can occur at any time during PIC assembly.

It localises to the cytoplasm. Its function is as follows. One of the essential components for the initiation of protein synthesis. Stabilizes the binding of IF-2 and IF-3 on the 30S subunit to which N-formylmethionyl-tRNA(fMet) subsequently binds. Helps modulate mRNA selection, yielding the 30S pre-initiation complex (PIC). Upon addition of the 50S ribosomal subunit IF-1, IF-2 and IF-3 are released leaving the mature 70S translation initiation complex. In Hydrogenovibrio crunogenus (strain DSM 25203 / XCL-2) (Thiomicrospira crunogena), this protein is Translation initiation factor IF-1.